A 305-amino-acid chain; its full sequence is Exosome complex component RRP45 (305 aa).

This sequence belongs to the RNase PH family. In terms of assembly, component of the RNA exosome complex. Specifically part of the catalytically inactive RNA exosome core complex (Exo-9) which may associate with the catalytic subunits RRP6 and DIS3 in cytoplasmic- and nuclear-specific RNA exosome complex forms. Exo-9 is formed by a hexameric base ring of RNase PH domain-containing subunits and a cap ring consisting of CSL4, RRP4 and RRP40. Interacts with LRP1.

The protein resides in the cytoplasm. The protein localises to the nucleus. Its subcellular location is the nucleolus. Functionally, non-catalytic component of the RNA exosome complex which has 3'-&gt;5' exoribonuclease activity and participates in a multitude of cellular RNA processing and degradation events. In the nucleus, the RNA exosome complex is involved in proper maturation of stable RNA species such as rRNA, snRNA and snoRNA, in the elimination of RNA processing by-products and non-coding 'pervasive' transcripts, such as antisense RNA species and cryptic unstable transcripts (CUTs), and of mRNAs with processing defects, thereby limiting or excluding their export to the cytoplasm. In the cytoplasm, the RNA exosome complex is involved in general mRNA turnover and in RNA surveillance pathways, preventing translation of aberrant mRNAs. The catalytic inactive RNA exosome core complex of 9 subunits (Exo-9) is proposed to play a pivotal role in the binding and presentation of RNA for ribonucleolysis, and to serve as a scaffold for the association with catalytic subunits and accessory proteins or complexes. RRP45 is part of the hexameric ring of RNase PH domain-containing subunits proposed to form a central channel which threads RNA substrates for degradation. The polypeptide is Exosome complex component RRP45 (RRP45) (Saccharomyces cerevisiae (strain ATCC 204508 / S288c) (Baker's yeast)).